The primary structure comprises 544 residues: Chaperonin GroEL 3 (544 aa).

ATP is bound by residues 30-33, Lys51, 87-91, Gly415, and Asp496; these read TLGP and DGTTT.

It belongs to the chaperonin (HSP60) family. Forms a cylinder of 14 subunits composed of two heptameric rings stacked back-to-back. Interacts with the co-chaperonin GroES.

It localises to the cytoplasm. It catalyses the reaction ATP + H2O + a folded polypeptide = ADP + phosphate + an unfolded polypeptide.. Functionally, together with its co-chaperonin GroES, plays an essential role in assisting protein folding. The GroEL-GroES system forms a nano-cage that allows encapsulation of the non-native substrate proteins and provides a physical environment optimized to promote and accelerate protein folding. In Rhizobium meliloti (strain 1021) (Ensifer meliloti), this protein is Chaperonin GroEL 3.